Here is an 859-residue protein sequence, read N- to C-terminus: Alanine--tRNA ligase (859 aa).

Zn(2+) contacts are provided by H562, H566, C664, and H668.

The protein belongs to the class-II aminoacyl-tRNA synthetase family. Zn(2+) serves as cofactor.

The protein resides in the cytoplasm. It catalyses the reaction tRNA(Ala) + L-alanine + ATP = L-alanyl-tRNA(Ala) + AMP + diphosphate. Its function is as follows. Catalyzes the attachment of alanine to tRNA(Ala) in a two-step reaction: alanine is first activated by ATP to form Ala-AMP and then transferred to the acceptor end of tRNA(Ala). Also edits incorrectly charged Ser-tRNA(Ala) and Gly-tRNA(Ala) via its editing domain. This is Alanine--tRNA ligase from Aliivibrio fischeri (strain ATCC 700601 / ES114) (Vibrio fischeri).